The primary structure comprises 103 residues: MAAISINVSTVKPLGDRVFVKVSASEEKTAGGILLPDTAKEKPQIGEIVTVGPGKRNDDGSRSEPEVKVGDKVLYSKYAGTDIKLGGEDYVLLSEKDILAVVD.

Belongs to the GroES chaperonin family. Heptamer of 7 subunits arranged in a ring. Interacts with the chaperonin GroEL.

Its subcellular location is the cytoplasm. Together with the chaperonin GroEL, plays an essential role in assisting protein folding. The GroEL-GroES system forms a nano-cage that allows encapsulation of the non-native substrate proteins and provides a physical environment optimized to promote and accelerate protein folding. GroES binds to the apical surface of the GroEL ring, thereby capping the opening of the GroEL channel. This chain is Co-chaperonin GroES, found in Rippkaea orientalis (strain PCC 8801 / RF-1) (Cyanothece sp. (strain PCC 8801)).